Here is a 37-residue protein sequence, read N- to C-terminus: Large ribosomal subunit protein bL36 (37 aa).

Belongs to the bacterial ribosomal protein bL36 family.

The polypeptide is Large ribosomal subunit protein bL36 (Bacillus anthracis (strain A0248)).